Reading from the N-terminus, the 325-residue chain is Putative gluconeogenesis factor (325 aa).

The protein belongs to the gluconeogenesis factor family.

It is found in the cytoplasm. In terms of biological role, required for morphogenesis under gluconeogenic growth conditions. This chain is Putative gluconeogenesis factor, found in Streptococcus pyogenes serotype M3 (strain ATCC BAA-595 / MGAS315).